A 501-amino-acid chain; its full sequence is Phosphoethanolamine N-methyltransferase 1 (501 aa).

Residues Gly72, Arg77, Asp93, Asp118, Val119, and Asn137 each coordinate S-adenosyl-L-homocysteine. Phosphocholine is bound by residues Ser170, Thr175, Gly176, Arg180, and Tyr187. Residues 256-257 (QY) and Tyr265 each bind N-methylethanolamine phosphate. Tyr265 lines the phosphocholine pocket. Residues Val274, Ser275, Gly301, Asp323, Asp349, Cys350, and Arg366 each coordinate S-adenosyl-L-homocysteine. Residues Tyr397, Tyr411, Arg415, Tyr417, and Lys483 each contribute to the phosphocholine site. Residues Tyr397, Tyr411, 415–417 (RGY), and Lys483 each bind N-methylethanolamine phosphate.

The protein belongs to the class I-like SAM-binding methyltransferase superfamily. PEAMT family.

The catalysed reaction is phosphoethanolamine + S-adenosyl-L-methionine = N-methylethanolamine phosphate + S-adenosyl-L-homocysteine + H(+). It carries out the reaction N-methylethanolamine phosphate + S-adenosyl-L-methionine = N,N-dimethylethanolamine phosphate + S-adenosyl-L-homocysteine + H(+). It catalyses the reaction N,N-dimethylethanolamine phosphate + S-adenosyl-L-methionine = phosphocholine + S-adenosyl-L-homocysteine + H(+). It participates in phospholipid metabolism; phosphatidylcholine biosynthesis; phosphocholine from phosphoethanolamine: step 1/1. In terms of biological role, involved in phosphocholine biosynthesis. Catalyzes the N-methylation of phosphoethanolamine, phosphomonomethylethanolamine and phosphodimethylethanolamine, the three methylation steps required to convert phosphoethanolamine to phosphocholine (PC). May be involved in root development. This Zea mays (Maize) protein is Phosphoethanolamine N-methyltransferase 1.